Here is a 453-residue protein sequence, read N- to C-terminus: Chromosomal replication initiator protein DnaA (453 aa).

The domain I, interacts with DnaA modulators stretch occupies residues 1–71 (MSEKEIWEKV…QAILFDVVGY (71 aa)). The segment at 71 to 114 (YEVKPHFITTEELANYSNNETATPKETTKPSTETTEDNHVLGRE) is domain II. The segment at 115–331 (QFNAHNTFDT…GALTRLLAYS (217 aa)) is domain III, AAA+ region. ATP contacts are provided by G159, G161, K162, and T163. The domain IV, binds dsDNA stretch occupies residues 332 to 453 (QLLGKPITTE…ENLEKEIRNV (122 aa)).

This sequence belongs to the DnaA family. In terms of assembly, oligomerizes as a right-handed, spiral filament on DNA at oriC.

The protein localises to the cytoplasm. In terms of biological role, plays an essential role in the initiation and regulation of chromosomal replication. ATP-DnaA binds to the origin of replication (oriC) to initiate formation of the DNA replication initiation complex once per cell cycle. Binds the DnaA box (a 9 base pair repeat at the origin) and separates the double-stranded (ds)DNA. Forms a right-handed helical filament on oriC DNA; dsDNA binds to the exterior of the filament while single-stranded (ss)DNA is stabiized in the filament's interior. The ATP-DnaA-oriC complex binds and stabilizes one strand of the AT-rich DNA unwinding element (DUE), permitting loading of DNA polymerase. After initiation quickly degrades to an ADP-DnaA complex that is not apt for DNA replication. Binds acidic phospholipids. This chain is Chromosomal replication initiator protein DnaA, found in Staphylococcus aureus (strain Mu3 / ATCC 700698).